Consider the following 822-residue polypeptide: Phenylalanine--tRNA ligase beta subunit (822 aa).

The tRNA-binding domain maps to 44–162; it reads LSKNTNLVVG…DQIALGSNAL (119 aa). The tract at residues 201-224 is disordered; the sequence is QSSNNNQETKSTNYKTKNSEDQTN. The B5 domain maps to 430 to 513; it reads RTNPTISLNL…RLYGCHKLPP (84 aa). Mg(2+) contacts are provided by D491, D497, and D501. Residues 730-822 enclose the FDX-ACB domain; sequence PKFPTVIRDL…LIKHFHIEIR (93 aa).

It belongs to the phenylalanyl-tRNA synthetase beta subunit family. Type 1 subfamily. As to quaternary structure, tetramer of two alpha and two beta subunits. Mg(2+) is required as a cofactor.

The protein resides in the cytoplasm. It catalyses the reaction tRNA(Phe) + L-phenylalanine + ATP = L-phenylalanyl-tRNA(Phe) + AMP + diphosphate + H(+). The protein is Phenylalanine--tRNA ligase beta subunit of Onion yellows phytoplasma (strain OY-M).